The primary structure comprises 118 residues: Large ribosomal subunit protein bL21c (118 aa).

This sequence belongs to the bacterial ribosomal protein bL21 family. In terms of assembly, part of the 50S ribosomal subunit.

Its subcellular location is the plastid. The protein localises to the chloroplast. Its function is as follows. This protein binds to 23S rRNA. The polypeptide is Large ribosomal subunit protein bL21c (Zygnema circumcarinatum (Green alga)).